The primary structure comprises 122 residues: Large ribosomal subunit protein uL14 (122 aa).

This sequence belongs to the universal ribosomal protein uL14 family. Part of the 50S ribosomal subunit. Forms a cluster with proteins L3 and L19. In the 70S ribosome, L14 and L19 interact and together make contacts with the 16S rRNA in bridges B5 and B8.

Its function is as follows. Binds to 23S rRNA. Forms part of two intersubunit bridges in the 70S ribosome. The chain is Large ribosomal subunit protein uL14 from Picosynechococcus sp. (strain ATCC 27264 / PCC 7002 / PR-6) (Agmenellum quadruplicatum).